A 372-amino-acid chain; its full sequence is Spermidine/putrescine import ATP-binding protein PotA (372 aa).

The ABC transporter domain maps to 11-241; the sequence is IELRSITKSY…PANLFVARFI (231 aa). 43–50 contacts ATP; sequence GPSGCGKT.

This sequence belongs to the ABC transporter superfamily. Spermidine/putrescine importer (TC 3.A.1.11.1) family. As to quaternary structure, the complex is composed of two ATP-binding proteins (PotA), two transmembrane proteins (PotB and PotC) and a solute-binding protein (PotD).

The protein localises to the cell inner membrane. It catalyses the reaction ATP + H2O + polyamine-[polyamine-binding protein]Side 1 = ADP + phosphate + polyamineSide 2 + [polyamine-binding protein]Side 1.. Its function is as follows. Part of the ABC transporter complex PotABCD involved in spermidine/putrescine import. Responsible for energy coupling to the transport system. This chain is Spermidine/putrescine import ATP-binding protein PotA, found in Aggregatibacter actinomycetemcomitans (Actinobacillus actinomycetemcomitans).